A 258-amino-acid chain; its full sequence is Acetylglutamate kinase (258 aa).

Residues 44-45 (GG), arginine 66, and asparagine 158 each bind substrate. Residues 181 to 186 (DVSGIL) and 209 to 211 (IIT) each bind ATP.

This sequence belongs to the acetylglutamate kinase family. ArgB subfamily. In terms of assembly, homodimer.

Its subcellular location is the cytoplasm. It carries out the reaction N-acetyl-L-glutamate + ATP = N-acetyl-L-glutamyl 5-phosphate + ADP. The protein operates within amino-acid biosynthesis; L-arginine biosynthesis; N(2)-acetyl-L-ornithine from L-glutamate: step 2/4. Catalyzes the ATP-dependent phosphorylation of N-acetyl-L-glutamate. The chain is Acetylglutamate kinase from Yersinia pestis bv. Antiqua (strain Antiqua).